Here is a 241-residue protein sequence, read N- to C-terminus: Octanoyltransferase (241 aa).

In terms of domain architecture, BPL/LPL catalytic spans 43-228; that stretch reads AETPDEIWLV…CLTANLDGSP (186 aa). Residues 83–90, 159–161, and 172–174 contribute to the substrate site; these read RGGQITYH, ALG, and GVS. Cysteine 190 functions as the Acyl-thioester intermediate in the catalytic mechanism.

This sequence belongs to the LipB family.

It is found in the cytoplasm. It catalyses the reaction octanoyl-[ACP] + L-lysyl-[protein] = N(6)-octanoyl-L-lysyl-[protein] + holo-[ACP] + H(+). It participates in protein modification; protein lipoylation via endogenous pathway; protein N(6)-(lipoyl)lysine from octanoyl-[acyl-carrier-protein]: step 1/2. In terms of biological role, catalyzes the transfer of endogenously produced octanoic acid from octanoyl-acyl-carrier-protein onto the lipoyl domains of lipoate-dependent enzymes. Lipoyl-ACP can also act as a substrate although octanoyl-ACP is likely to be the physiological substrate. This Paraburkholderia xenovorans (strain LB400) protein is Octanoyltransferase.